The primary structure comprises 370 residues: Queuine tRNA-ribosyltransferase (370 aa).

Residue aspartate 89 is the Proton acceptor of the active site. Substrate-binding positions include 89–93 (DSGGF), aspartate 143, glutamine 185, and glycine 212. An RNA binding region spans residues 243–249 (GVGTPED). Aspartate 262 functions as the Nucleophile in the catalytic mechanism. The tract at residues 267–271 (TRNAR) is RNA binding; important for wobble base 34 recognition. Zn(2+)-binding residues include cysteine 300, cysteine 302, cysteine 305, and histidine 331.

Belongs to the queuine tRNA-ribosyltransferase family. Homodimer. Within each dimer, one monomer is responsible for RNA recognition and catalysis, while the other monomer binds to the replacement base PreQ1. Zn(2+) is required as a cofactor.

The catalysed reaction is 7-aminomethyl-7-carbaguanine + guanosine(34) in tRNA = 7-aminomethyl-7-carbaguanosine(34) in tRNA + guanine. The protein operates within tRNA modification; tRNA-queuosine biosynthesis. Functionally, catalyzes the base-exchange of a guanine (G) residue with the queuine precursor 7-aminomethyl-7-deazaguanine (PreQ1) at position 34 (anticodon wobble position) in tRNAs with GU(N) anticodons (tRNA-Asp, -Asn, -His and -Tyr). Catalysis occurs through a double-displacement mechanism. The nucleophile active site attacks the C1' of nucleotide 34 to detach the guanine base from the RNA, forming a covalent enzyme-RNA intermediate. The proton acceptor active site deprotonates the incoming PreQ1, allowing a nucleophilic attack on the C1' of the ribose to form the product. After dissociation, two additional enzymatic reactions on the tRNA convert PreQ1 to queuine (Q), resulting in the hypermodified nucleoside queuosine (7-(((4,5-cis-dihydroxy-2-cyclopenten-1-yl)amino)methyl)-7-deazaguanosine). The sequence is that of Queuine tRNA-ribosyltransferase from Methylobacillus flagellatus (strain ATCC 51484 / DSM 6875 / VKM B-1610 / KT).